The following is an 88-amino-acid chain: Phosphocarrier protein HPr (88 aa).

Residues 1–88 (MEQQSYTIID…DVLSKEGLTE (88 aa)) enclose the HPr domain. H15 functions as the Pros-phosphohistidine intermediate in the catalytic mechanism. S46 is subject to Phosphoserine; by HPrK/P.

This sequence belongs to the HPr family.

The protein resides in the cytoplasm. Phosphorylation on Ser-46 inhibits the phosphoryl transfer from enzyme I to HPr. Functionally, general (non sugar-specific) component of the phosphoenolpyruvate-dependent sugar phosphotransferase system (sugar PTS). This major carbohydrate active-transport system catalyzes the phosphorylation of incoming sugar substrates concomitantly with their translocation across the cell membrane. The phosphoryl group from phosphoenolpyruvate (PEP) is transferred to the phosphoryl carrier protein HPr by enzyme I. Phospho-HPr then transfers it to the PTS EIIA domain. Its function is as follows. P-Ser-HPr interacts with the catabolite control protein A (CcpA), forming a complex that binds to DNA at the catabolite response elements cre, operator sites preceding a large number of catabolite-regulated genes. Thus, P-Ser-HPr is a corepressor in carbon catabolite repression (CCR), a mechanism that allows bacteria to coordinate and optimize the utilization of available carbon sources. P-Ser-HPr also plays a role in inducer exclusion, in which it probably interacts with several non-PTS permeases and inhibits their transport activity. The polypeptide is Phosphocarrier protein HPr (ptsH) (Staphylococcus carnosus).